A 444-amino-acid polypeptide reads, in one-letter code: MLPSAQVARLKPDPFPPSLSPIPHGAVTFAALAPCHNLPIFSSRQMLRDSLTYSHTSPTMSPQIANRFEASLDAQDIARISLFTLESGVILRDVPVAYKSWGRMNVSRDNCVIVCHTLTSSAHVTSWWPTLFGQGRAFDTSRYFIICLNYLGSPFGSAGPCSPDPDAEGQRPYGAKFPRTTIRDDVRIHRQVLDRLGVRQIAAVVGASMGGMHTLEWAFFGPEYVRKIVPIATSCRQSGWCAAWFETQRQCIYDDPKYLDGEYDVDDQPVRGLETARKIANLTYKSKPAMDERFHMAPGVQAGRNISSQDAKKEINGTDSGNSHRAGQPIEAVSSYLRYQAQKFAASFDANCYIAMTLKFDTHDISRGRAGSIPEALAMITQPALIICARSDGLYSFDEHVEMGRSIPNSRLCVVDTNEGHDFFVMEADKVNDAVRGFLDQSLM.

The propeptide occupies 1–71; it reads MLPSAQVARL…PQIANRFEAS (71 aa). Residues 112-425 form the AB hydrolase-1 domain; the sequence is VIVCHTLTSS…DTNEGHDFFV (314 aa). Active-site residues include Ser-208 and His-421.

The protein belongs to the AB hydrolase superfamily. MetX family. As to quaternary structure, heterodimer of chain I and chain II.

It catalyses the reaction deacetylcephalosporin C + acetyl-CoA = cephalosporin C + CoA. Its pathway is antibiotic biosynthesis; cephalosporin C biosynthesis. In terms of biological role, catalyzes the conversion of deacetylcephalosporin C to cephalosporin C. The protein is Acetyl-CoA--deacetylcephalosporin C acetyltransferase (CEFG) of Hapsidospora chrysogena (Acremonium chrysogenum).